The chain runs to 1401 residues: Uveal autoantigen with coiled-coil domains and ankyrin repeats protein (1401 aa).

ANK repeat units follow at residues 25–53 (LMRAAERGDVEKVSSILAKKGVNPGKLDV), 54–83 (EGRSAFHVVASKGNLECLNAILIHGVDITT), 87–116 (AGRNALHLAAKYGHALCLQKLLQYNCPTEH), 120–149 (QGRTALHDAAMADCPSSIQLLCDHGASVNA), 153–182 (DGRTPLVLATQMCRPTICQLLIDRGADINS), and 186–215 (QNRTALMLGCEYGCKDAVEVLIKNGADVTL). At Ser265 the chain carries Phosphoserine. Coiled-coil stretches lie at residues 273 to 361 (TKSN…SRFK), 423 to 827 (ENEI…EKIY), and 856 to 1368 (ALSS…VIAI). Residue Lys1020 forms a Glycyl lysine isopeptide (Lys-Gly) (interchain with G-Cter in SUMO2) linkage.

In terms of assembly, component of the apoptosome complex, composed of APAF1, pro-caspase-9 and UACA. In the complex, it probably interacts directly with APAF1. Interacts with LGALS3. Interacts with ARF6 and ACTB. Interacts with RAB39A. Highly expressed in muscle and heart, moderately in liver, kidney and pancreas, and weakly in placenta and lung.

The protein localises to the nucleus. It localises to the cytoplasm. The protein resides in the cytoskeleton. Regulates APAF1 expression and plays an important role in the regulation of stress-induced apoptosis. Promotes apoptosis by regulating three pathways, apoptosome up-regulation, LGALS3/galectin-3 down-regulation and NF-kappa-B inactivation. Regulates the redistribution of APAF1 into the nucleus after proapoptotic stress. Down-regulates the expression of LGALS3 by inhibiting NFKB1. In terms of biological role, modulates isoactin dynamics to regulate the morphological alterations required for cell growth and motility. Interaction with ARF6 may modulate cell shape and motility after injury. May be involved in multiple neurite formation. The sequence is that of Uveal autoantigen with coiled-coil domains and ankyrin repeats protein (UACA) from Bos taurus (Bovine).